The primary structure comprises 555 residues: Formate--tetrahydrofolate ligase (555 aa).

Residue 65–72 participates in ATP binding; sequence TPAGEGKT.

Belongs to the formate--tetrahydrofolate ligase family.

It catalyses the reaction (6S)-5,6,7,8-tetrahydrofolate + formate + ATP = (6R)-10-formyltetrahydrofolate + ADP + phosphate. It participates in one-carbon metabolism; tetrahydrofolate interconversion. This chain is Formate--tetrahydrofolate ligase, found in Thermoanaerobacter sp. (strain X514).